The following is a 329-amino-acid chain: 4-hydroxythreonine-4-phosphate dehydrogenase (329 aa).

The substrate site is built by H136 and T137. Positions 166, 211, and 266 each coordinate a divalent metal cation. Substrate contacts are provided by K274, N283, and R292.

The protein belongs to the PdxA family. Homodimer. Zn(2+) serves as cofactor. Mg(2+) is required as a cofactor. Requires Co(2+) as cofactor.

The protein resides in the cytoplasm. It catalyses the reaction 4-(phosphooxy)-L-threonine + NAD(+) = 3-amino-2-oxopropyl phosphate + CO2 + NADH. It functions in the pathway cofactor biosynthesis; pyridoxine 5'-phosphate biosynthesis; pyridoxine 5'-phosphate from D-erythrose 4-phosphate: step 4/5. Its function is as follows. Catalyzes the NAD(P)-dependent oxidation of 4-(phosphooxy)-L-threonine (HTP) into 2-amino-3-oxo-4-(phosphooxy)butyric acid which spontaneously decarboxylates to form 3-amino-2-oxopropyl phosphate (AHAP). This chain is 4-hydroxythreonine-4-phosphate dehydrogenase, found in Citrobacter koseri (strain ATCC BAA-895 / CDC 4225-83 / SGSC4696).